The primary structure comprises 464 residues: Myrosinase 1 (464 aa).

Gln-19 contributes to the substrate binding site. Residues His-39 and Asp-52 each coordinate Zn(2+). 2 residues coordinate substrate: His-122 and Asn-166. The Nucleophile role is filled by Glu-167. Catalysis depends on Glu-374, which acts as the Proton donor. Residue Asn-397 is glycosylated (N-linked (GlcNAc...) asparagine).

Homodimer. Expressed in the skeletal muscle tissues surrounding the head, abdomen and thorax. Not expressed in flight muscles (at protein level).

The enzyme catalyses a thioglucoside + H2O = a sugar + a thiol.. Hydrolyzes glucosinolates to a labile aglycone. This rapidly undergoes spontaneous rearrangement, eliminating sulfur to yield a number of toxic metabolites. Thereby developing a chemical defense system that exploits and mimics the host plant. This chain is Myrosinase 1, found in Brevicoryne brassicae (Mealy cabbage aphid).